The following is a 137-amino-acid chain: L-ectoine synthase (137 aa).

Residues 115-137 (EVHDESGAYPADPELAREPVAAD) are disordered.

It belongs to the ectoine synthase family.

It catalyses the reaction (2S)-4-acetamido-2-aminobutanoate = L-ectoine + H2O. Its pathway is amine and polyamine biosynthesis; ectoine biosynthesis; L-ectoine from L-aspartate 4-semialdehyde: step 3/3. Functionally, catalyzes the circularization of gamma-N-acetyl-alpha,gamma-diaminobutyric acid (ADABA) to ectoine (1,4,5,6-tetrahydro-2-methyl-4-pyrimidine carboxylic acid), which is an excellent osmoprotectant. The polypeptide is L-ectoine synthase (Sphingopyxis alaskensis (strain DSM 13593 / LMG 18877 / RB2256) (Sphingomonas alaskensis)).